Reading from the N-terminus, the 384-residue chain is Spermidine/putrescine import ATP-binding protein PotA (384 aa).

The ABC transporter domain occupies Ile-26–Ile-260. Residue Gly-62–Thr-69 participates in ATP binding.

The protein belongs to the ABC transporter superfamily. Spermidine/putrescine importer (TC 3.A.1.11.1) family. The complex is composed of two ATP-binding proteins (PotA), two transmembrane proteins (PotB and PotC) and a solute-binding protein (PotD).

Its subcellular location is the cell membrane. It carries out the reaction ATP + H2O + polyamine-[polyamine-binding protein]Side 1 = ADP + phosphate + polyamineSide 2 + [polyamine-binding protein]Side 1.. Its function is as follows. Part of the ABC transporter complex PotABCD involved in spermidine/putrescine import. Responsible for energy coupling to the transport system. The polypeptide is Spermidine/putrescine import ATP-binding protein PotA (Thermobifida fusca (strain YX)).